The chain runs to 203 residues: Pyridoxine/pyridoxamine 5'-phosphate oxidase (203 aa).

Residues 50–55 (RMVLLK), 65–66 (YT), lysine 71, lysine 72, and glutamine 94 contribute to the FMN site. Position 55 (lysine 55) interacts with substrate. Residues tyrosine 112, arginine 116, and serine 120 each contribute to the substrate site. Residues 129–130 (QS) and tryptophan 174 each bind FMN. 180 to 182 (RLH) contacts substrate. An FMN-binding site is contributed by arginine 184.

The protein belongs to the pyridoxamine 5'-phosphate oxidase family. Homodimer. The cofactor is FMN.

The enzyme catalyses pyridoxamine 5'-phosphate + O2 + H2O = pyridoxal 5'-phosphate + H2O2 + NH4(+). It carries out the reaction pyridoxine 5'-phosphate + O2 = pyridoxal 5'-phosphate + H2O2. Its pathway is cofactor metabolism; pyridoxal 5'-phosphate salvage; pyridoxal 5'-phosphate from pyridoxamine 5'-phosphate: step 1/1. The protein operates within cofactor metabolism; pyridoxal 5'-phosphate salvage; pyridoxal 5'-phosphate from pyridoxine 5'-phosphate: step 1/1. In terms of biological role, catalyzes the oxidation of either pyridoxine 5'-phosphate (PNP) or pyridoxamine 5'-phosphate (PMP) into pyridoxal 5'-phosphate (PLP). In Brucella canis (strain ATCC 23365 / NCTC 10854 / RM-666), this protein is Pyridoxine/pyridoxamine 5'-phosphate oxidase.